The following is a 237-amino-acid chain: UPF0280 protein Mpal_1292 (237 aa).

Belongs to the UPF0280 family.

The polypeptide is UPF0280 protein Mpal_1292 (Methanosphaerula palustris (strain ATCC BAA-1556 / DSM 19958 / E1-9c)).